Reading from the N-terminus, the 180-residue chain is UPF0149 protein XAC3406 (180 aa).

It belongs to the UPF0149 family.

The sequence is that of UPF0149 protein XAC3406 from Xanthomonas axonopodis pv. citri (strain 306).